Consider the following 1178-residue polypeptide: Mannosyltransferase regulator 4 (1178 aa).

The Cytoplasmic portion of the chain corresponds to 1 to 27 (MLQRISSKLHRRFLSGLLRVKHYPLRR). A helical; Signal-anchor for type II membrane protein membrane pass occupies residues 28 to 48 (ILLPLILLQIIIITFIWSNSP). At 49-1178 (QRNGLGRDAD…KKKQEEGHSN (1130 aa)) the chain is on the lumenal side. A DXD motif is present at residues 519 to 521 (DFD). Positions 1041 to 1178 (EKKKKEEEEK…KKKQEEGHSN (138 aa)) are disordered. Repeat copies occupy residues 1042–1049 (KKKKEEEE), 1050–1057 (KKKKEEEE), 1058–1065 (KKKKEEEE), 1066–1073 (KKKKEEEE), 1074–1081 (KKKKEEEE), and 1082–1089 (KKKKEEEE). Residues 1042-1174 (KKKKEEEEKK…EEEEKKKQEE (133 aa)) are 17 X 8 AA tandem repeats of K-K-K-K-E-E-E-E. A 7; approximate repeat occupies 1090 to 1097 (KKKQEEEE). Residues 1098–1105 (KKKKEEEE) form repeat 8. The stretch at 1106–1113 (KKKQEEGE) is one 9; approximate repeat. One copy of the 10; approximate repeat lies at 1114 to 1121 (KMKNEDEE). An 11; approximate repeat occupies 1122-1129 (NKKNEDEE). The stretch at 1130 to 1137 (KKKNEEEE) is repeat 12. Residues 1138–1144 (KKKQEEK) form a 13; approximate repeat. The stretch at 1145–1152 (NKKNEDEE) is one 14; approximate repeat. Residues 1153–1160 (KKKQEEEE) form a 15; approximate repeat. A 16; approximate repeat occupies 1161-1168 (KKKNEEEE). The stretch at 1169–1174 (KKKQEE) is one 17; truncated repeat.

Belongs to the MNN4 family.

It localises to the golgi apparatus membrane. Its function is as follows. Golgi apparatus protein involved in N-glycan mannosylphosphorylation. While MNN4 seems to have a regulatory role in N-glycan mannosylphosphorylation, a transferase activity of MNN4 can not be ruled out. Mediates mannosylphosphate transfer in both the core and outer chain portions of N-linked oligosaccharides. Has partially redundant function with MNN14. This chain is Mannosyltransferase regulator 4, found in Saccharomyces cerevisiae (strain ATCC 204508 / S288c) (Baker's yeast).